A 187-amino-acid chain; its full sequence is GTP cyclohydrolase 1 (187 aa).

Zn(2+) contacts are provided by cysteine 76, histidine 79, and cysteine 148.

This sequence belongs to the GTP cyclohydrolase I family. Toroid-shaped homodecamer, composed of two pentamers of five dimers.

The enzyme catalyses GTP + H2O = 7,8-dihydroneopterin 3'-triphosphate + formate + H(+). Its pathway is cofactor biosynthesis; 7,8-dihydroneopterin triphosphate biosynthesis; 7,8-dihydroneopterin triphosphate from GTP: step 1/1. The sequence is that of GTP cyclohydrolase 1 from Streptococcus agalactiae serotype Ia (strain ATCC 27591 / A909 / CDC SS700).